The sequence spans 373 residues: Erythronate-4-phosphate dehydrogenase (373 aa).

The substrate site is built by serine 45 and threonine 66. NAD(+) contacts are provided by aspartate 146 and threonine 173. Residue arginine 206 is part of the active site. Residue aspartate 230 participates in NAD(+) binding. Residue glutamate 235 is part of the active site. Histidine 252 functions as the Proton donor in the catalytic mechanism. Residue glycine 255 participates in NAD(+) binding. A substrate-binding site is contributed by tyrosine 256.

The protein belongs to the D-isomer specific 2-hydroxyacid dehydrogenase family. PdxB subfamily. In terms of assembly, homodimer.

The protein localises to the cytoplasm. The catalysed reaction is 4-phospho-D-erythronate + NAD(+) = (R)-3-hydroxy-2-oxo-4-phosphooxybutanoate + NADH + H(+). Its pathway is cofactor biosynthesis; pyridoxine 5'-phosphate biosynthesis; pyridoxine 5'-phosphate from D-erythrose 4-phosphate: step 2/5. Functionally, catalyzes the oxidation of erythronate-4-phosphate to 3-hydroxy-2-oxo-4-phosphonooxybutanoate. This Saccharophagus degradans (strain 2-40 / ATCC 43961 / DSM 17024) protein is Erythronate-4-phosphate dehydrogenase.